A 915-amino-acid polypeptide reads, in one-letter code: Bifunctional uridylyltransferase/uridylyl-removing enzyme (915 aa).

Residues 1–360 (MFNCAVTAID…PDEERPKKQP (360 aa)) form a uridylyltransferase region. A uridylyl-removing region spans residues 361-731 (INARFNQVGE…EHRELALDAV (371 aa)). The HD domain maps to 478-594 (VDAHTLFLIR…TLFADLVGNV (117 aa)). ACT domains lie at 732–817 (QVFV…RIPR) and 840–915 (IMSL…NDSI).

Belongs to the GlnD family. The cofactor is Mg(2+).

It catalyses the reaction [protein-PII]-L-tyrosine + UTP = [protein-PII]-uridylyl-L-tyrosine + diphosphate. The enzyme catalyses [protein-PII]-uridylyl-L-tyrosine + H2O = [protein-PII]-L-tyrosine + UMP + H(+). Its activity is regulated as follows. Uridylyltransferase (UTase) activity is inhibited by glutamine, while glutamine activates uridylyl-removing (UR) activity. Functionally, modifies, by uridylylation and deuridylylation, the PII regulatory proteins (GlnB and homologs), in response to the nitrogen status of the cell that GlnD senses through the glutamine level. Under low glutamine levels, catalyzes the conversion of the PII proteins and UTP to PII-UMP and PPi, while under higher glutamine levels, GlnD hydrolyzes PII-UMP to PII and UMP (deuridylylation). Thus, controls uridylylation state and activity of the PII proteins, and plays an important role in the regulation of nitrogen assimilation and metabolism. This chain is Bifunctional uridylyltransferase/uridylyl-removing enzyme, found in Psychrobacter arcticus (strain DSM 17307 / VKM B-2377 / 273-4).